Here is a 208-residue protein sequence, read N- to C-terminus: Effector protein MavE (208 aa).

An NPxY eukaryotic motif motif is present at residues 77–80; it reads NPRY. The helical transmembrane segment at 184–204 threads the bilayer; sequence VLFPFVAATVAVAATAASVLF.

Homotrimer.

It is found in the secreted. The protein resides in the host vacuole. The protein localises to the host pathogen-containing vacuole. Its subcellular location is the host pathogen-containing vacuole membrane. Its function is as follows. Virulence effector that is indispensable for endoplasmic reticulum (ER)-mediated remodeling of the Legionella pneumophila-containing vacuole (LCV) and lysosomal evasion. Essential for intracellular replication in human monocyte-derived macrophages (hMDMs) and amoebae, as well as for intrapulmonary proliferation in mice. The sequence is that of Effector protein MavE from Legionella pneumophila subsp. pneumophila (strain Philadelphia 1 / ATCC 33152 / DSM 7513).